Here is a 475-residue protein sequence, read N- to C-terminus: Ribosomal protein uS12 methylthiotransferase RimO (475 aa).

One can recognise an MTTase N-terminal domain in the interval 36–150; it reads NKINFISLGC…ILKAVQSTQK (115 aa). Positions 45, 81, 113, 185, 189, and 192 each coordinate [4Fe-4S] cluster. The Radical SAM core domain maps to 171-403; sequence STPKHYAYLK…MQVQKKVVKK (233 aa). The TRAM domain occupies 406–475; it reads KKMIGKKIAV…ADYDLVGHVI (70 aa).

This sequence belongs to the methylthiotransferase family. RimO subfamily. The cofactor is [4Fe-4S] cluster.

The protein resides in the cytoplasm. The catalysed reaction is L-aspartate(89)-[ribosomal protein uS12]-hydrogen + (sulfur carrier)-SH + AH2 + 2 S-adenosyl-L-methionine = 3-methylsulfanyl-L-aspartate(89)-[ribosomal protein uS12]-hydrogen + (sulfur carrier)-H + 5'-deoxyadenosine + L-methionine + A + S-adenosyl-L-homocysteine + 2 H(+). In terms of biological role, catalyzes the methylthiolation of an aspartic acid residue of ribosomal protein uS12. The protein is Ribosomal protein uS12 methylthiotransferase RimO of Protochlamydia amoebophila (strain UWE25).